We begin with the raw amino-acid sequence, 397 residues long: Cathepsin E-B (397 aa).

The signal sequence occupies residues 1 to 16 (MRQILVLLLFVTLVYG). Positions 17-49 (LIRVPLKRQKSIRKTPKEKGKLSHVWTQQGIDM) are cleaved as a propeptide — activation peptide. Positions 74–385 (YFGEISIGTP…DRGNNRVGLA (312 aa)) constitute a Peptidase A1 domain. Asparagine 86 is a glycosylation site (N-linked (GlcNAc...) asparagine). Aspartate 92 is an active-site residue. A disulfide bridge connects residues cysteine 105 and cysteine 110. Asparagine 130 carries N-linked (GlcNAc...) asparagine glycosylation. A disulfide bridge links cysteine 268 with cysteine 272. The active site involves aspartate 277. A disulfide bond links cysteine 310 and cysteine 344.

Belongs to the peptidase A1 family. As to quaternary structure, homodimer; disulfide-linked. In terms of processing, glycosylated. Contains high mannose-type oligosaccharide. Expressed predominantly in the anterior and posterior adult stomach and at much lower levels in the larval foregut.

It localises to the endosome. It carries out the reaction Similar to cathepsin D, but slightly broader specificity.. May have a role in immune function. Probably involved in the processing of antigenic peptides during MHC class II-mediated antigen presentation. The chain is Cathepsin E-B (ctse-b) from Xenopus laevis (African clawed frog).